The chain runs to 687 residues: Glycine--tRNA ligase beta subunit (687 aa).

Belongs to the class-II aminoacyl-tRNA synthetase family. Tetramer of two alpha and two beta subunits.

Its subcellular location is the cytoplasm. The catalysed reaction is tRNA(Gly) + glycine + ATP = glycyl-tRNA(Gly) + AMP + diphosphate. This Lactobacillus acidophilus (strain ATCC 700396 / NCK56 / N2 / NCFM) protein is Glycine--tRNA ligase beta subunit.